A 413-amino-acid chain; its full sequence is CinA-like protein (413 aa).

It belongs to the CinA family.

The chain is CinA-like protein from Geobacter sulfurreducens (strain ATCC 51573 / DSM 12127 / PCA).